Consider the following 248-residue polypeptide: Peptidyl-tRNA hydrolase (248 aa).

TRNA is bound at residue tyrosine 14. The active-site Proton acceptor is the histidine 19. Residues phenylalanine 64, asparagine 66, and asparagine 112 each coordinate tRNA. Residues 190 to 248 (PRSSTGEASKGRKKAQKSEPGVAKTPAKAATPEAPAAGDIPAAPEDSRSPMQKLLDKFK) form a disordered region. The segment covering 212 to 226 (AKTPAKAATPEAPAA) has biased composition (low complexity).

The protein belongs to the PTH family. Monomer.

The protein localises to the cytoplasm. It catalyses the reaction an N-acyl-L-alpha-aminoacyl-tRNA + H2O = an N-acyl-L-amino acid + a tRNA + H(+). Its function is as follows. Hydrolyzes ribosome-free peptidyl-tRNAs (with 1 or more amino acids incorporated), which drop off the ribosome during protein synthesis, or as a result of ribosome stalling. Catalyzes the release of premature peptidyl moieties from peptidyl-tRNA molecules trapped in stalled 50S ribosomal subunits, and thus maintains levels of free tRNAs and 50S ribosomes. In Ruegeria sp. (strain TM1040) (Silicibacter sp.), this protein is Peptidyl-tRNA hydrolase.